The primary structure comprises 205 residues: tRNA (guanine-N(7)-)-methyltransferase (205 aa).

Residues glutamate 34, glutamate 59, aspartate 86, and aspartate 107 each contribute to the S-adenosyl-L-methionine site. Aspartate 107 is a catalytic residue. Substrate is bound at residue lysine 111. The interaction with RNA stretch occupies residues 113–118; sequence RHEKRR. Residues aspartate 144 and 182-185 each bind substrate; that span reads TGYE.

The protein belongs to the class I-like SAM-binding methyltransferase superfamily. TrmB family.

The catalysed reaction is guanosine(46) in tRNA + S-adenosyl-L-methionine = N(7)-methylguanosine(46) in tRNA + S-adenosyl-L-homocysteine. The protein operates within tRNA modification; N(7)-methylguanine-tRNA biosynthesis. Functionally, catalyzes the formation of N(7)-methylguanine at position 46 (m7G46) in tRNA. In Mycoplasmopsis synoviae (strain 53) (Mycoplasma synoviae), this protein is tRNA (guanine-N(7)-)-methyltransferase.